Here is a 316-residue protein sequence, read N- to C-terminus: Acetyl-coenzyme A carboxylase carboxyl transferase subunit alpha (316 aa).

The CoA carboxyltransferase C-terminal domain occupies 35–292; it reads EIEILSQKLE…KTYVLQELKD (258 aa).

Belongs to the AccA family. In terms of assembly, acetyl-CoA carboxylase is a heterohexamer composed of biotin carboxyl carrier protein (AccB), biotin carboxylase (AccC) and two subunits each of ACCase subunit alpha (AccA) and ACCase subunit beta (AccD).

It is found in the cytoplasm. It catalyses the reaction N(6)-carboxybiotinyl-L-lysyl-[protein] + acetyl-CoA = N(6)-biotinyl-L-lysyl-[protein] + malonyl-CoA. The protein operates within lipid metabolism; malonyl-CoA biosynthesis; malonyl-CoA from acetyl-CoA: step 1/1. Functionally, component of the acetyl coenzyme A carboxylase (ACC) complex. First, biotin carboxylase catalyzes the carboxylation of biotin on its carrier protein (BCCP) and then the CO(2) group is transferred by the carboxyltransferase to acetyl-CoA to form malonyl-CoA. The polypeptide is Acetyl-coenzyme A carboxylase carboxyl transferase subunit alpha (Alkaliphilus oremlandii (strain OhILAs) (Clostridium oremlandii (strain OhILAs))).